We begin with the raw amino-acid sequence, 207 residues long: Redox-sensing transcriptional repressor Rex (207 aa).

A DNA-binding region (H-T-H motif) is located at residues Leu-15 to Phe-54. An NAD(+)-binding site is contributed by Gly-89–Gly-94.

The protein belongs to the transcriptional regulatory Rex family. Homodimer.

Its subcellular location is the cytoplasm. Modulates transcription in response to changes in cellular NADH/NAD(+) redox state. The sequence is that of Redox-sensing transcriptional repressor Rex from Thermosipho africanus (strain TCF52B).